The chain runs to 449 residues: Packaging protein 1 (449 aa).

A disordered region spans residues methionine 1–arginine 78. Glycine 171–serine 178 serves as a coordination point for ATP. The DNA-binding stretch occupies residues arginine 440–lysine 449.

The protein belongs to the adenoviridae packaging protein 1 family. In terms of assembly, homodimer. Part of a genome packaging complex composed of packaging proteins 1, 2 and 3; this complex specifically binds to the packaging sequence on the left end of viral genomic DNA and performs packaging of the viral genome. Interacts with protein 33K.

It localises to the virion. It is found in the host nucleus. The protein resides in the host nucleoplasm. Its subcellular location is the host nucleolus. Its function is as follows. Component of the packaging machinery which encapsidates the viral DNA into preformed capsids and transcriptional activator of the viral major late promoter (MLP). Binds, along with packaging proteins 2 and 3, to the specific packaging sequence on the left end of viral genomic DNA and displays ATPase activity thereby providing the power stroke of the packaging machinery. The activity of packaging protein IVa2 is stimulated by protein 33K which acts as a terminase. May be the protein that pumps DNA into the capsid powered by ATP hydrolysis. Specifically binds to the 5'-CG-3' nucleotides of the repeats making up the packaging sequence. Component of the DEF-A and DEF-B transcription factors that bind downstream elements of the major late promoter (MLP), and stimulate transcription from the MLP after initiation of viral DNA replication. DEF-A is a heterodimer packaging proteins 1 and 2 and DEF-B is a homodimer of packaging protein 1. The polypeptide is Packaging protein 1 (Human adenovirus C serotype 5 (HAdV-5)).